We begin with the raw amino-acid sequence, 540 residues long: Phenylalanine--tRNA ligase beta subunit (540 aa).

The B5 domain occupies 266–342 (LRPEKRTVSV…IAYGYDKIET (77 aa)). Aspartate 320, aspartate 326, glutamate 329, and aspartate 330 together coordinate Mg(2+).

Belongs to the phenylalanyl-tRNA synthetase beta subunit family. Type 2 subfamily. As to quaternary structure, tetramer of two alpha and two beta subunits. It depends on Mg(2+) as a cofactor.

The protein resides in the cytoplasm. It catalyses the reaction tRNA(Phe) + L-phenylalanine + ATP = L-phenylalanyl-tRNA(Phe) + AMP + diphosphate + H(+). This is Phenylalanine--tRNA ligase beta subunit from Methanocorpusculum labreanum (strain ATCC 43576 / DSM 4855 / Z).